The following is a 439-amino-acid chain: Dihydroorotase (439 aa).

His73 and His75 together coordinate Zn(2+). Residues His75–Arg77 and Asn107 contribute to the substrate site. Residues Asp165, His192, and His245 each coordinate Zn(2+). Asn291 serves as a coordination point for substrate. Residue Asp318 participates in Zn(2+) binding. The active site involves Asp318. His322 is a substrate binding site.

This sequence belongs to the metallo-dependent hydrolases superfamily. DHOase family. Class I DHOase subfamily. Zn(2+) is required as a cofactor.

The enzyme catalyses (S)-dihydroorotate + H2O = N-carbamoyl-L-aspartate + H(+). It participates in pyrimidine metabolism; UMP biosynthesis via de novo pathway; (S)-dihydroorotate from bicarbonate: step 3/3. Its function is as follows. Catalyzes the reversible cyclization of carbamoyl aspartate to dihydroorotate. The chain is Dihydroorotase from Syntrophobacter fumaroxidans (strain DSM 10017 / MPOB).